Reading from the N-terminus, the 102-residue chain is Small ribosomal subunit protein uS10 (102 aa).

The protein belongs to the universal ribosomal protein uS10 family. Part of the 30S ribosomal subunit.

Its function is as follows. Involved in the binding of tRNA to the ribosomes. The chain is Small ribosomal subunit protein uS10 from Exiguobacterium sibiricum (strain DSM 17290 / CCUG 55495 / CIP 109462 / JCM 13490 / 255-15).